We begin with the raw amino-acid sequence, 693 residues long: MATQDFLVELGTEELPPKALKPLSDAFTQGIVKGLEEAGVAFGAVESFAAPRRLAVRIRDLADAQPDKSVEKRGPAVKAAFDDSGNPTRALTGFATSLGITPDQLDTMETDKGAWLVYRTVEKGKPTVELMPDLVEKSLAALPIPKRMRWGAWKTEFVRPVHWLILLYGNKVIEAPVMNLKPGNKTRGHRFHCPKELIVPTPADYEVVLKQEGYVLADFAERREQIRAGVAALAEKEAGGKAVIDEDLLDEVTALNEWPVPLMGRFEDRFLEVPAEALISSMKEHQKYFHVVDASDNMLPLFITVANLESKDPSQVISGNEKVIRPRLSDAAFFYETDRKTRLEDRIESLKPIVFQDKLGSIYDKSVRVAALAKKIAEAINSDPALAERAAMLAKTDLVTEMVLEFTDLQGIMGQYYAANDGEHEDVAKALNEQYMPRFAGDDLPTTLTGCAVAIADRIDSLVGLFGINQPPSGTRDPFALRRASLGVLRIIIERQLPLDLQTVCEWAEQNFTVLTENNTASTVVDYMLDRFRAHYDEQGICAEVYLAVHARRPTRPLDFDRRVKAVEAFRQLPEAQALAGANKRVSNILTKQGGDSIGETVDTALLQDAAEKTLAAKVEEQAQQVLPMFEQGDYASALTSLASLREPVDTFFDEVMVMADDDAVRNNRLALLNRLRNLFLRVADISLLPTAG.

Over residues 65–74 (QPDKSVEKRG) the composition is skewed to basic and acidic residues. The tract at residues 65–84 (QPDKSVEKRGPAVKAAFDDS) is disordered.

It belongs to the class-II aminoacyl-tRNA synthetase family. As to quaternary structure, tetramer of two alpha and two beta subunits.

It localises to the cytoplasm. It carries out the reaction tRNA(Gly) + glycine + ATP = glycyl-tRNA(Gly) + AMP + diphosphate. The protein is Glycine--tRNA ligase beta subunit of Marinobacter nauticus (strain ATCC 700491 / DSM 11845 / VT8) (Marinobacter aquaeolei).